Here is a 210-residue protein sequence, read N- to C-terminus: Thymidylate kinase (210 aa).

10 to 17 (GLEGAGKS) is a binding site for ATP.

The protein belongs to the thymidylate kinase family.

The catalysed reaction is dTMP + ATP = dTDP + ADP. Functionally, phosphorylation of dTMP to form dTDP in both de novo and salvage pathways of dTTP synthesis. The chain is Thymidylate kinase from Hamiltonella defensa subsp. Acyrthosiphon pisum (strain 5AT).